A 393-amino-acid polypeptide reads, in one-letter code: Dihydrolipoyllysine-residue succinyltransferase component of 2-oxoglutarate dehydrogenase complex (393 aa).

Positions 3 to 78 (RINILVPDLP…KSNQILGNIV (76 aa)) constitute a Lipoyl-binding domain. Lys44 bears the N6-lipoyllysine mark. Residues His364 and Asp368 contribute to the active site.

Belongs to the 2-oxoacid dehydrogenase family. In terms of assembly, forms a 24-polypeptide structural core with octahedral symmetry. Part of the 2-oxoglutarate dehydrogenase (OGDH) complex composed of E1 (2-oxoglutarate dehydrogenase), E2 (dihydrolipoamide succinyltransferase) and E3 (dihydrolipoamide dehydrogenase); the complex contains multiple copies of the three enzymatic components (E1, E2 and E3). It depends on (R)-lipoate as a cofactor.

The enzyme catalyses N(6)-[(R)-dihydrolipoyl]-L-lysyl-[protein] + succinyl-CoA = N(6)-[(R)-S(8)-succinyldihydrolipoyl]-L-lysyl-[protein] + CoA. Its pathway is amino-acid degradation; L-lysine degradation via saccharopine pathway; glutaryl-CoA from L-lysine: step 6/6. E2 component of the 2-oxoglutarate dehydrogenase (OGDH) complex which catalyzes the second step in the conversion of 2-oxoglutarate to succinyl-CoA and CO(2). This Buchnera aphidicola subsp. Schizaphis graminum (strain Sg) protein is Dihydrolipoyllysine-residue succinyltransferase component of 2-oxoglutarate dehydrogenase complex (sucB).